A 238-amino-acid polypeptide reads, in one-letter code: IkB-like protein (238 aa).

4 ANK repeats span residues 47–76, 86–119, 123–152, and 157–186; these read NGSS…YPGE, DGNS…RICL, NGIT…DPTQ, and RGFT…KPLY. Residues 80–86 carry the Nuclear localization signal motif; that stretch reads PHRRDKD. Positions 202–213 match the Nuclear localization signal motif; the sequence is KKKPKIIITGCK. The PxIxITxC motif; Interaction with host PPP3CA motif lies at 205 to 212; that stretch reads PKIIITGC. An FLCV motif motif is present at residues 227-230; that stretch reads FLCV.

This sequence belongs to the asfivirus A238L family. Interacts with host PPIA. Interacts with host PPP3CA/Calcineurin. Interacts with host RELA/p65; interaction of the 32 kDa form with host RELA results in the formation of a stable complex with NF-kappa-B. Interacts with host PPP3R1. Interacts with host EP300; this interaction inhibits the association of host EP300 with host RELA, JUN and NFATC2. The protein exists in a 28 kDa and a 32 kDa form, probably due to post-translational modifications which are neither phosphorylation, nor sumoylation.

The protein resides in the host nucleus. It localises to the host cytoplasm. Its function is as follows. IkB-like protein that inhibits the binding of NF-kappa-B to DNA, thereby downregulating pro-inflammatory cytokine production. Forms a heterodimer with the NF-kappa-B subunit RELA/p65 and prevents the activation of the NF-kappa-B transcription factor. Inhibits calcineurin function, which is required for the induction of nuclear factor of activated T cells (NFAT)-dependent immune response genes. Prevents the binding of substrates to calcineurin without affecting the phosphatase activity. Does not contain the serine residues that are phosphorylated by host IkB kinase and thus is not degraded following stimulation of the NFkB pathway. The sequence is that of IkB-like protein (A238L) from African swine fever virus (isolate Warthog/Namibia/Wart80/1980) (ASFV).